Reading from the N-terminus, the 165-residue chain is Phosphopantetheine adenylyltransferase (165 aa).

Residue T11 participates in substrate binding. Residues 11 to 12 and H19 each bind ATP; that span reads TF. Residues K43, V75, and R89 each coordinate substrate. ATP is bound by residues 90 to 92, E100, and 125 to 131; these read GLR and YQFISST.

Belongs to the bacterial CoaD family. As to quaternary structure, homohexamer. It depends on Mg(2+) as a cofactor.

Its subcellular location is the cytoplasm. The catalysed reaction is (R)-4'-phosphopantetheine + ATP + H(+) = 3'-dephospho-CoA + diphosphate. It functions in the pathway cofactor biosynthesis; coenzyme A biosynthesis; CoA from (R)-pantothenate: step 4/5. In terms of biological role, reversibly transfers an adenylyl group from ATP to 4'-phosphopantetheine, yielding dephospho-CoA (dPCoA) and pyrophosphate. This chain is Phosphopantetheine adenylyltransferase, found in Acidovorax ebreus (strain TPSY) (Diaphorobacter sp. (strain TPSY)).